The primary structure comprises 287 residues: Large ribosomal subunit protein uL2 (287 aa).

Positions 216–287 (RRPEVRGSVM…SKRGRGGRDA (72 aa)) are disordered. The span at 271–287 (QRRRRKSSKRGRGGRDA) shows a compositional bias: basic residues.

Belongs to the universal ribosomal protein uL2 family. Part of the 50S ribosomal subunit. Forms a bridge to the 30S subunit in the 70S ribosome.

Functionally, one of the primary rRNA binding proteins. Required for association of the 30S and 50S subunits to form the 70S ribosome, for tRNA binding and peptide bond formation. It has been suggested to have peptidyltransferase activity; this is somewhat controversial. Makes several contacts with the 16S rRNA in the 70S ribosome. This Synechococcus sp. (strain ATCC 27144 / PCC 6301 / SAUG 1402/1) (Anacystis nidulans) protein is Large ribosomal subunit protein uL2.